The chain runs to 225 residues: Thymidine kinase (225 aa).

15-22 (GSMFSGKT) provides a ligand contact to ATP. The interval 85-110 (KKQNHRTTTQCRSGDGTNNPGGVIPS) is disordered. The segment covering 90–104 (RTTTQCRSGDGTNNP) has biased composition (polar residues). 121–124 (DEAN) contacts ATP. Catalysis depends on glutamate 122, which acts as the Proton acceptor. The Zn(2+) site is built by cysteine 178, cysteine 181, cysteine 216, and cysteine 219.

It belongs to the thymidine kinase family. Homotetramer.

It localises to the cytoplasm. It catalyses the reaction thymidine + ATP = dTMP + ADP + H(+). The chain is Thymidine kinase from Haloquadratum walsbyi (strain DSM 16790 / HBSQ001).